The chain runs to 148 residues: Large ribosomal subunit protein bL9 (148 aa).

This sequence belongs to the bacterial ribosomal protein bL9 family.

Functionally, binds to the 23S rRNA. This chain is Large ribosomal subunit protein bL9, found in Pseudomonas aeruginosa (strain LESB58).